A 449-amino-acid chain; its full sequence is UDP-N-acetylmuramoylalanine--D-glutamate ligase (449 aa).

118 to 124 lines the ATP pocket; that stretch reads GSNGKTT.

It belongs to the MurCDEF family.

The protein localises to the cytoplasm. It catalyses the reaction UDP-N-acetyl-alpha-D-muramoyl-L-alanine + D-glutamate + ATP = UDP-N-acetyl-alpha-D-muramoyl-L-alanyl-D-glutamate + ADP + phosphate + H(+). It functions in the pathway cell wall biogenesis; peptidoglycan biosynthesis. In terms of biological role, cell wall formation. Catalyzes the addition of glutamate to the nucleotide precursor UDP-N-acetylmuramoyl-L-alanine (UMA). The chain is UDP-N-acetylmuramoylalanine--D-glutamate ligase from Leuconostoc citreum (strain KM20).